Consider the following 312-residue polypeptide: MPLRLVFMGTPDFAVPTLLALSAYGHDIAAVYSREPKPAGRGMKLQHSPVAQEAQRLGIPVLTPKTLRTDEALAEFRSHEADAAVVVAYGMILPQAILDAPKLGCYNLHGSLLPRWRGAAPLNRAIMAGDAESGVMVMKMDVGLDTGDVAMAERIAITDAMTVTDLHDALARLGADLMVRAMAALERGGLQLARQSEHGVSYAAKIDKAEAKIDFARPAQAVLRHIHGLSPFPGAWCELPIDGEAVRVKILRCALADGRGAPGEMLGDDLTIACADGAIRVLQLQRAGKQPMSADEFLRGTPIAKGVRVSSS.

111–114 (SLLP) is a binding site for (6S)-5,6,7,8-tetrahydrofolate.

Belongs to the Fmt family.

The enzyme catalyses L-methionyl-tRNA(fMet) + (6R)-10-formyltetrahydrofolate = N-formyl-L-methionyl-tRNA(fMet) + (6S)-5,6,7,8-tetrahydrofolate + H(+). Its function is as follows. Attaches a formyl group to the free amino group of methionyl-tRNA(fMet). The formyl group appears to play a dual role in the initiator identity of N-formylmethionyl-tRNA by promoting its recognition by IF2 and preventing the misappropriation of this tRNA by the elongation apparatus. In Rhodopseudomonas palustris (strain HaA2), this protein is Methionyl-tRNA formyltransferase.